Consider the following 367-residue polypeptide: DNA replication and repair protein RecF (367 aa).

30–37 provides a ligand contact to ATP; it reads GANGSGKT.

It belongs to the RecF family.

It localises to the cytoplasm. The RecF protein is involved in DNA metabolism; it is required for DNA replication and normal SOS inducibility. RecF binds preferentially to single-stranded, linear DNA. It also seems to bind ATP. This is DNA replication and repair protein RecF from Pseudomonas fluorescens (strain ATCC BAA-477 / NRRL B-23932 / Pf-5).